Reading from the N-terminus, the 266-residue chain is 3-methyl-2-oxobutanoate hydroxymethyltransferase 2 (266 aa).

The Mg(2+) site is built by Asp45 and Asp84. 3-methyl-2-oxobutanoate contacts are provided by residues 45–46, Asp84, and Lys112; that span reads DS. Mg(2+) is bound at residue Glu114. The Proton acceptor role is filled by Glu181.

Belongs to the PanB family. In terms of assembly, homodecamer; pentamer of dimers. It depends on Mg(2+) as a cofactor.

The protein resides in the cytoplasm. The enzyme catalyses 3-methyl-2-oxobutanoate + (6R)-5,10-methylene-5,6,7,8-tetrahydrofolate + H2O = 2-dehydropantoate + (6S)-5,6,7,8-tetrahydrofolate. It participates in cofactor biosynthesis; (R)-pantothenate biosynthesis; (R)-pantoate from 3-methyl-2-oxobutanoate: step 1/2. In terms of biological role, catalyzes the reversible reaction in which hydroxymethyl group from 5,10-methylenetetrahydrofolate is transferred onto alpha-ketoisovalerate to form ketopantoate. The sequence is that of 3-methyl-2-oxobutanoate hydroxymethyltransferase 2 from Pseudomonas fluorescens (strain ATCC BAA-477 / NRRL B-23932 / Pf-5).